The following is a 395-amino-acid chain: Immunoglobulin heavy constant gamma 2 (395 aa).

Residues 1-98 (ASTKGPSVFP…PSNTKVDKTV (98 aa)) are CH1. Residues 1–346 (ASTKGPSVFP…DGELDGLWTT (346 aa)) lie on the Extracellular side of the membrane. Ig-like domains lie at 6 to 99 (PSVF…KTVE), 117 to 216 (PSVF…KTIS), and 225 to 321 (PQVY…KSLS). Residues cysteine 27 and cysteine 83 are joined by a disulfide bond. Residues 99–110 (ERKCCVECPPCP) are hinge. A CH2 region spans residues 111-219 (APPVAGPSVF…PIEKTISKTK (109 aa)). Cystine bridges form between cysteine 140–cysteine 200 and cysteine 246–cysteine 304. N-linked (GlcNAc...) (complex) asparagine glycosylation occurs at asparagine 176. The tract at residues 220–326 (GQPREPQVYT…QKSLSLSPEL (107 aa)) is CH3. The chain crosses the membrane as a helical span at residues 347–367 (ITIFITLFLLSVCYSATITFF). Residues 368 to 395 (KVKWIFSSVVDLKQTIVPDYRNMIRQGA) lie on the Cytoplasmic side of the membrane.

In terms of assembly, immunoglobulins are composed of two identical heavy chains and two identical light chains; disulfide-linked. Post-translationally, glycosylation on Asn-176 is required for interaction with Fc receptors and ability to activate the complement pathway. (Microbial infection) Deglycosylation on Asn-176 by S.pyogenes EndoS or Endos2 endoglucosidases prevents interaction between immunoglobulin-gamma (IgG) and Fc receptors, impairing ability to activate the complement pathway.

It localises to the secreted. It is found in the cell membrane. Its function is as follows. Constant region of immunoglobulin heavy chains. Immunoglobulins, also known as antibodies, are membrane-bound or secreted glycoproteins produced by B lymphocytes. In the recognition phase of humoral immunity, the membrane-bound immunoglobulins serve as receptors which, upon binding of a specific antigen, trigger the clonal expansion and differentiation of B lymphocytes into immunoglobulins-secreting plasma cells. Secreted immunoglobulins mediate the effector phase of humoral immunity, which results in the elimination of bound antigens. The antigen binding site is formed by the variable domain of one heavy chain, together with that of its associated light chain. Thus, each immunoglobulin has two antigen binding sites with remarkable affinity for a particular antigen. The variable domains are assembled by a process called V-(D)-J rearrangement and can then be subjected to somatic hypermutations which, after exposure to antigen and selection, allow affinity maturation for a particular antigen. This Homo sapiens (Human) protein is Immunoglobulin heavy constant gamma 2.